A 308-amino-acid chain; its full sequence is Folate transporter 1, chloroplastic (308 aa).

Solcar repeat units lie at residues 4–94 (SWQW…AKQR), 104–192 (LSPA…LRKI), and 213–299 (ADYA…VLKL). The next 6 helical transmembrane spans lie at 10–30 (ATAG…LDVV), 74–91 (VIGS…YGRA), 110–130 (LASA…IWLV), 164–184 (ALYK…IQFT), 216–236 (AALG…FQVI), and 274–293 (GLTA…FIVY).

This sequence belongs to the mitochondrial carrier (TC 2.A.29) family. In terms of tissue distribution, ubiquitous.

The protein localises to the plastid. It is found in the chloroplast membrane. In terms of biological role, mediates folate import into chloroplast. The chain is Folate transporter 1, chloroplastic (FOLT1) from Arabidopsis thaliana (Mouse-ear cress).